We begin with the raw amino-acid sequence, 1395 residues long: DNA-directed RNA polymerase subunit beta' (1395 aa).

Zn(2+)-binding residues include Cys70, Cys72, Cys85, and Cys88. Residues Asp460, Asp462, and Asp464 each contribute to the Mg(2+) site. Positions 814, 888, 895, and 898 each coordinate Zn(2+).

The protein belongs to the RNA polymerase beta' chain family. As to quaternary structure, the RNAP catalytic core consists of 2 alpha, 1 beta, 1 beta' and 1 omega subunit. When a sigma factor is associated with the core the holoenzyme is formed, which can initiate transcription. Mg(2+) is required as a cofactor. It depends on Zn(2+) as a cofactor.

The catalysed reaction is RNA(n) + a ribonucleoside 5'-triphosphate = RNA(n+1) + diphosphate. Functionally, DNA-dependent RNA polymerase catalyzes the transcription of DNA into RNA using the four ribonucleoside triphosphates as substrates. The protein is DNA-directed RNA polymerase subunit beta' of Pseudoalteromonas atlantica (strain T6c / ATCC BAA-1087).